Here is a 507-residue protein sequence, read N- to C-terminus: Transcription factor SOX-9 (507 aa).

Disordered regions lie at residues 1–67 and 160–250; these read MNLL…SEED and RLRV…AGKV. The segment covering 30–41 has biased composition (low complexity); that stretch reads SAGSPCPSGSGS. Polar residues predominate over residues 42 to 52; that stretch reads DTENTRPQENT. Composition is skewed to basic and acidic residues over residues 56–67 and 160–174; these read GEPDLKKESEED and RLRVQHKKDHPDYKY. The tract at residues 63–103 is dimerization (DIM); that stretch reads ESEEDKFPVCIREAVSQVLKGYDWTLVPMPVRVNGSSKNKP. The segment at 63–103 is PQA; the sequence is ESEEDKFPVCIREAVSQVLKGYDWTLVPMPVRVNGSSKNKP. S64 is subject to Phosphoserine; by PKA. A DNA-binding region (HMG box) is located at residues 105-173; it reads VKRPMNAFMV…QHKKDHPDYK (69 aa). Phosphoserine; by PKA is present on S211. Residues 224-307 form a transactivation domain (TAM) region; it reads PGEHSGQSQG…LPPNGHPGVP (84 aa). 2 consecutive short sequence motifs (9aaTAD) follow at residues 275–284 and 290–298; these read IGELSSDVIS and DVNEFDQYL. A disordered region spans residues 335-429; it reads WMSKQQAPPP…PFNLPHYSPS (95 aa). Residues 341–369 are compositionally biased toward pro residues; it reads APPPPPQQPPQAPQAPQAPPQQQAPPQQP. Polar residues predominate over residues 378 to 420; that stretch reads HTLTTLSSEPGQSQRTHIKTEQLSPSHYSEQQQHSPQQISYSP. Residues 392 to 507 are transactivation domain (TAC); it reads RTHIKTEQLS…QPVYTQLTRP (116 aa). Residue K396 forms a Glycyl lysine isopeptide (Lys-Gly) (interchain with G-Cter in ubiquitin) linkage. Residues 458–466 carry the 9aaTAD 3 motif; it reads SGLYSTFTY. Residues 477-507 form a disordered region; it reads PIADTSGVPSIPQTHSPQHWEQPVYTQLTRP. Residues 483-507 are compositionally biased toward polar residues; that stretch reads GVPSIPQTHSPQHWEQPVYTQLTRP.

In terms of assembly, homodimer; homodimerization is required for activity. Interacts (via C-terminus) with ZNF219; forming a complex that binds to the COL2A1 promoter and activates COL2A1 expression. Interacts with DDRGK1. Interacts with EP300/p300. Interacts with beta-catenin (CTNNB1); inhibiting CTNNB1 activity by competing with the binding sites of TCF/LEF within CTNNB1. Acetylated; acetylation impairs nuclear localization and ability to transactivate expression of target genes. Deacetylated by SIRT1. Post-translationally, phosphorylation at Ser-64 and Ser-211 by PKA increases transcriptional activity and may help delay chondrocyte maturation downstream of PTHLH/PTHrP signaling. Phosphorylation at either Ser-64 or Ser-211 is required for sumoylation, but phosphorylation is not dependent on sumoylation. Phosphorylated on tyrosine residues; tyrosine dephosphorylation by PTPN11/SHP2 blocks SOX9 phosphorylation by PKA and subsequent SUMOylation. In terms of processing, sumoylated; phosphorylation at either Ser-64 or Ser-211 is required for sumoylation. Sumoylation is induced by BMP signaling pathway. Ubiquitinated; ubiquitination leads to proteasomal degradation and is negatively regulated by DDRGK1. Expressed in the intestinal epithelium (at protein level). Expressed in progenitor cells in various organs, including chondroprogenitors, osteoprogenitors and preadipocytes, but is not expressed in most differentiated cell types such as osteoblasts and adipocytes, with the exception of chondrocytes. Highly expressed in developing chondrogenic tissues. Also expressed in some non-chondrogenic tissues such as notochord, otic vesicle and neural tube.

Its subcellular location is the nucleus. Its function is as follows. Transcription factor that plays a key role in chondrocytes differentiation and skeletal development. Specifically binds the 5'-ACAAAG-3' DNA motif present in enhancers and super-enhancers and promotes expression of genes important for chondrogenesis, including cartilage matrix protein-coding genes COL2A1, COL4A2, COL9A1, COL11A2 and ACAN, SOX5 and SOX6. Also binds to some promoter regions. Plays a central role in successive steps of chondrocyte differentiation. Absolutely required for precartilaginous condensation, the first step in chondrogenesis during which skeletal progenitors differentiate into prechondrocytes. Together with SOX5 and SOX6, required for overt chondrogenesis when condensed prechondrocytes differentiate into early stage chondrocytes, the second step in chondrogenesis. Later, required to direct hypertrophic maturation and block osteoblast differentiation of growth plate chondrocytes: maintains chondrocyte columnar proliferation, delays prehypertrophy and then prevents osteoblastic differentiation of chondrocytes by lowering beta-catenin (CTNNB1) signaling and RUNX2 expression. Also required for chondrocyte hypertrophy, both indirectly, by keeping the lineage fate of chondrocytes, and directly, by remaining present in upper hypertrophic cells and transactivating COL10A1 along with MEF2C. Low lipid levels are the main nutritional determinant for chondrogenic commitment of skeletal progenitor cells: when lipids levels are low, FOXO (FOXO1 and FOXO3) transcription factors promote expression of SOX9, which induces chondrogenic commitment and suppresses fatty acid oxidation. Mechanistically, helps, but is not required, to remove epigenetic signatures of transcriptional repression and deposit active promoter and enhancer marks at chondrocyte-specific genes. Acts in cooperation with the Hedgehog pathway-dependent GLI (GLI1 and GLI3) transcription factors. In addition to cartilage development, also acts as a regulator of proliferation and differentiation in epithelial stem/progenitor cells: involved in the lung epithelium during branching morphogenesis, by balancing proliferation and differentiation and regulating the extracellular matrix. Controls epithelial branching during kidney development. This chain is Transcription factor SOX-9, found in Mus musculus (Mouse).